The sequence spans 346 residues: Holliday junction branch migration complex subunit RuvB (346 aa).

Positions 1–181 (MSDRNPLIDA…FGIPVRLNFY (181 aa)) are large ATPase domain (RuvB-L). ATP-binding positions include leucine 20, arginine 21, glycine 62, lysine 65, threonine 66, threonine 67, 128–130 (EDF), arginine 171, tyrosine 181, and arginine 218. Threonine 66 serves as a coordination point for Mg(2+). The segment at 182–252 (TVEELEYIVR…IADEALSRLE (71 aa)) is small ATPAse domain (RuvB-S). Residues 255–346 (NRGLDQLDRR…SQYGLFMEDE (92 aa)) form a head domain (RuvB-H) region. Residues arginine 291, arginine 310, and arginine 315 each contribute to the DNA site.

This sequence belongs to the RuvB family. As to quaternary structure, homohexamer. Forms an RuvA(8)-RuvB(12)-Holliday junction (HJ) complex. HJ DNA is sandwiched between 2 RuvA tetramers; dsDNA enters through RuvA and exits via RuvB. An RuvB hexamer assembles on each DNA strand where it exits the tetramer. Each RuvB hexamer is contacted by two RuvA subunits (via domain III) on 2 adjacent RuvB subunits; this complex drives branch migration. In the full resolvosome a probable DNA-RuvA(4)-RuvB(12)-RuvC(2) complex forms which resolves the HJ.

Its subcellular location is the cytoplasm. The catalysed reaction is ATP + H2O = ADP + phosphate + H(+). In terms of biological role, the RuvA-RuvB-RuvC complex processes Holliday junction (HJ) DNA during genetic recombination and DNA repair, while the RuvA-RuvB complex plays an important role in the rescue of blocked DNA replication forks via replication fork reversal (RFR). RuvA specifically binds to HJ cruciform DNA, conferring on it an open structure. The RuvB hexamer acts as an ATP-dependent pump, pulling dsDNA into and through the RuvAB complex. RuvB forms 2 homohexamers on either side of HJ DNA bound by 1 or 2 RuvA tetramers; 4 subunits per hexamer contact DNA at a time. Coordinated motions by a converter formed by DNA-disengaged RuvB subunits stimulates ATP hydrolysis and nucleotide exchange. Immobilization of the converter enables RuvB to convert the ATP-contained energy into a lever motion, pulling 2 nucleotides of DNA out of the RuvA tetramer per ATP hydrolyzed, thus driving DNA branch migration. The RuvB motors rotate together with the DNA substrate, which together with the progressing nucleotide cycle form the mechanistic basis for DNA recombination by continuous HJ branch migration. Branch migration allows RuvC to scan DNA until it finds its consensus sequence, where it cleaves and resolves cruciform DNA. The chain is Holliday junction branch migration complex subunit RuvB from Brucella suis (strain ATCC 23445 / NCTC 10510).